We begin with the raw amino-acid sequence, 313 residues long: MTQWYPVSPTLWQGRDDSAEAADARRLFQTVIRSEDFAPQDWPKQIALMGFACDEGVKRNAGRPGAAGAPDALRKALANMASHNGHERLVDLGNWVAQAPDLEGAQQTLRDAVRRCLCAGMRTLVLGGGHETAFGHGAGVLDAFAQESVGIINLDAHLDLRQTERATSGTPFRQLAQLCDAQRRVFHYACFGVSRAANTRALWREATRRNVTVVEDLDCYNALAQMTQFIARVDKIYLTIDLDVLPVWEMPAVSAPAALGVPLIQILRLIEPVCRSGKLQAADLVEFNPRFDKDGAAARVAARLGWQIAHWWR.

Positions 130, 155, 157, 159, 241, and 243 each coordinate Mn(2+).

It belongs to the arginase family. It depends on Mn(2+) as a cofactor.

The catalysed reaction is N-formimidoyl-L-glutamate + H2O = formamide + L-glutamate. The protein operates within amino-acid degradation; L-histidine degradation into L-glutamate; L-glutamate from N-formimidoyl-L-glutamate (hydrolase route): step 1/1. Its function is as follows. Catalyzes the conversion of N-formimidoyl-L-glutamate to L-glutamate and formamide. The polypeptide is Formimidoylglutamase (Salmonella arizonae (strain ATCC BAA-731 / CDC346-86 / RSK2980)).